The following is a 128-amino-acid chain: Large ribosomal subunit protein uL24 (128 aa).

This sequence belongs to the universal ribosomal protein uL24 family. As to quaternary structure, part of the 50S ribosomal subunit.

One of two assembly initiator proteins, it binds directly to the 5'-end of the 23S rRNA, where it nucleates assembly of the 50S subunit. Its function is as follows. Located at the polypeptide exit tunnel on the outside of the subunit. This is Large ribosomal subunit protein uL24 from Pyrobaculum calidifontis (strain DSM 21063 / JCM 11548 / VA1).